The primary structure comprises 256 residues: Major prion protein (256 aa).

An N-terminal signal peptide occupies residues 1-24 (MVKSHIGSWILVLFVAMWSDVGLC). Positions 25–233 (KKRPKPGGGW…ESQAYYQRGA (209 aa)) are interaction with GRB2, ERI3 and SYN1. The tract at residues 28–110 (PKPGGGWNTG…QWNKPSKPKT (83 aa)) is disordered. 5 consecutive repeat copies span residues 54-62 (PQGAGGWGQ), 63-70 (PHGGGWGQ), 71-78 (PHGGGWGQ), 79-86 (PHGGGWGQ), and 87-95 (PHGGGGWGQ). The tract at residues 54 to 95 (PQGAGGWGQPHGGGWGQPHGGGWGQPHGGGWGQPHGGGGWGQ) is 5 X 8 AA tandem repeats of P-H-G-G-G-W-G-Q. Residues 56 to 97 (GAGGWGQPHGGGWGQPHGGGWGQPHGGGWGQPHGGGGWGQGG) show a composition bias toward gly residues. His-64, Gly-65, Gly-66, His-72, Gly-73, Gly-74, His-80, Gly-81, Gly-82, His-88, Gly-90, and Gly-91 together coordinate Cu(2+). Cys-182 and Cys-217 are oxidised to a cystine. 2 N-linked (GlcNAc...) asparagine glycosylation sites follow: Asn-184 and Asn-200. Residue Ala-233 is the site of GPI-anchor amidated alanine attachment. Residues 234–256 (SVILFSSPPVILLISFLIFLIVG) constitute a propeptide, removed in mature form.

The protein belongs to the prion family. In terms of assembly, monomer and homodimer. Has a tendency to aggregate into amyloid fibrils containing a cross-beta spine, formed by a steric zipper of superposed beta-strands. Soluble oligomers may represent an intermediate stage on the path to fibril formation. Copper binding may promote oligomerization. Interacts with GRB2, APP, ERI3/PRNPIP and SYN1. Mislocalized cytosolically exposed PrP interacts with MGRN1; this interaction alters MGRN1 subcellular location and causes lysosomal enlargement. Interacts with KIAA1191.

Its subcellular location is the cell membrane. The protein resides in the golgi apparatus. Its function is as follows. Its primary physiological function is unclear. Has cytoprotective activity against internal or environmental stresses. May play a role in neuronal development and synaptic plasticity. May be required for neuronal myelin sheath maintenance. May play a role in iron uptake and iron homeostasis. Soluble oligomers are toxic to cultured neuroblastoma cells and induce apoptosis (in vitro). Association with GPC1 (via its heparan sulfate chains) targets PRNP to lipid rafts. Also provides Cu(2+) or Zn(2+) for the ascorbate-mediated GPC1 deaminase degradation of its heparan sulfate side chains. The chain is Major prion protein (PRNP) from Moschus chrysogaster (Alpine musk deer).